The chain runs to 893 residues: Translation initiation factor IF-2 (893 aa).

Disordered regions lie at residues 51–203 (KEHG…AEAE) and 216–300 (EENE…SMQH). 3 stretches are compositionally biased toward basic and acidic residues: residues 102–203 (ALEE…AEAE), 216–238 (EENE…DADY), and 245–261 (HARE…EQQP). The region spanning 392-561 (GRAPVVTIMG…LLQSEVLELT (170 aa)) is the tr-type G domain. The G1 stretch occupies residues 401–408 (GHVDHGKT). 401-408 (GHVDHGKT) is a GTP binding site. Positions 426–430 (GITQH) are G2. Residues 447 to 450 (DTPG) are G3. GTP-binding positions include 447–451 (DTPGH) and 501–504 (NKID). A G4 region spans residues 501–504 (NKID). A G5 region spans residues 537–539 (SAK).

The protein belongs to the TRAFAC class translation factor GTPase superfamily. Classic translation factor GTPase family. IF-2 subfamily.

It is found in the cytoplasm. In terms of biological role, one of the essential components for the initiation of protein synthesis. Protects formylmethionyl-tRNA from spontaneous hydrolysis and promotes its binding to the 30S ribosomal subunits. Also involved in the hydrolysis of GTP during the formation of the 70S ribosomal complex. In Aliivibrio fischeri (strain MJ11) (Vibrio fischeri), this protein is Translation initiation factor IF-2.